Here is a 407-residue protein sequence, read N- to C-terminus: Methylthioribose kinase (407 aa).

ATP-binding positions include Asn-40, Lys-57, and 111–113 (EDL). Asp-229 is a binding site for substrate. 246–248 (DAE) contacts ATP. Position 344 (Arg-344) interacts with substrate.

Belongs to the methylthioribose kinase family. Homodimer.

The enzyme catalyses 5-(methylsulfanyl)-D-ribose + ATP = 5-(methylsulfanyl)-alpha-D-ribose 1-phosphate + ADP + H(+). It functions in the pathway amino-acid biosynthesis; L-methionine biosynthesis via salvage pathway; S-methyl-5-thio-alpha-D-ribose 1-phosphate from S-methyl-5'-thioadenosine (hydrolase route): step 2/2. Its function is as follows. Catalyzes the phosphorylation of methylthioribose into methylthioribose-1-phosphate. The protein is Methylthioribose kinase of Yersinia pseudotuberculosis serotype O:1b (strain IP 31758).